A 213-amino-acid chain; its full sequence is ATP synthase subunit b 2 (213 aa).

The tract at residues Met-1–Gly-45 is disordered. The helical transmembrane segment at Thr-57 to Met-76 threads the bilayer.

It belongs to the ATPase B chain family. In terms of assembly, F-type ATPases have 2 components, F(1) - the catalytic core - and F(0) - the membrane proton channel. F(1) has five subunits: alpha(3), beta(3), gamma(1), delta(1), epsilon(1). F(0) has three main subunits: a(1), b(2) and c(10-14). The alpha and beta chains form an alternating ring which encloses part of the gamma chain. F(1) is attached to F(0) by a central stalk formed by the gamma and epsilon chains, while a peripheral stalk is formed by the delta and b chains.

Its subcellular location is the cell inner membrane. Its function is as follows. F(1)F(0) ATP synthase produces ATP from ADP in the presence of a proton or sodium gradient. F-type ATPases consist of two structural domains, F(1) containing the extramembraneous catalytic core and F(0) containing the membrane proton channel, linked together by a central stalk and a peripheral stalk. During catalysis, ATP synthesis in the catalytic domain of F(1) is coupled via a rotary mechanism of the central stalk subunits to proton translocation. Functionally, component of the F(0) channel, it forms part of the peripheral stalk, linking F(1) to F(0). The b'-subunit is a diverged and duplicated form of b found in plants and photosynthetic bacteria. The sequence is that of ATP synthase subunit b 2 (atpF2) from Agrobacterium fabrum (strain C58 / ATCC 33970) (Agrobacterium tumefaciens (strain C58)).